Reading from the N-terminus, the 795-residue chain is MKKLGRIHPNRQVLAFILMVFLSQVRLEPIRYSVLEETESGSFVAHLAKDLGLGIGELASRSARVLSDDDKQRLQLDRQTGDLLLREKLDREELCGPIEPCVLHFQVFLEMPVQFFQGELLIQDINDHSPIFPEREVLLKILENSQPGTLFPLLIAEDLDVGSNGLQKYTISPNSHFHILTRNHSEGKKYPDLVQDKPLDREEQPEFSLTLVALDGGSPPRSGTVMVRILIMDINDNAPEFVHTPYGVQVLENSPLDSPIVRVLARDIDAGNFGSVSYGLFQASDEIKQTFSINEVTGEILLKKKLDFEKIKSYHVEIEATDGGGLSGKGTVVIEVVDVNDNPPELIISSLTSSIPENAPETVVSIFRIRDRDSGENGKMICSIPDNLPFILKPTLKNFYTLVTERPLDRETSAEYNITIAVTDLGTPRLKTQQNITVQVSDVNDNAPAFTQTSYTLFVRENNSPALHIGSVSATDRDSGTNAQVTYSLLPPQDPHLPLASLVSINADNGHLFALRSLDYEALQAFEFRVGASDRGSPALSSEALVRVLVLDTNDNSPFVLYPLQNGSAPCTELVPRAAEPGYLVTKVVAVDGDSGQNAWLSYQLLKATEPGLFGVWAHNGEVRTARLLSERDAAKHRLVVLVKDNGEPPRSATATLHVLLVDGFSQPYLPLPEAAPAQAQADSLTVYLVVALASVSSLFLFSVLLFVAVRLCRRSRAASVGRCSVPEGPFPGHLVDVSGTGTLSQSYQYEVCLTGDSGTGEFKFLKPIFPNLLVQDTGREVKENPKFRNSLVFS.

Positions 1–27 are cleaved as a signal peptide; it reads MKKLGRIHPNRQVLAFILMVFLSQVRL. Topologically, residues 28-689 are extracellular; it reads EPIRYSVLEE…AQADSLTVYL (662 aa). Cadherin domains follow at residues 34 to 132, 137 to 241, 246 to 346, 351 to 450, and 455 to 560; these read VLEE…SPIF, VLLK…APEF, YGVQ…PPEL, LTSS…APAF, and YTLF…SPFV. Asn183 carries N-linked (GlcNAc...) asparagine glycosylation. N-linked (GlcNAc...) asparagine glycosylation is found at Asn417 and Asn435. Residue Asn566 is glycosylated (N-linked (GlcNAc...) asparagine). Residues 567–670 form the Cadherin 6 domain; that stretch reads GSAPCTELVP…LVDGFSQPYL (104 aa). The helical transmembrane segment at 690–710 threads the bilayer; that stretch reads VVALASVSSLFLFSVLLFVAV. Residues 711 to 795 are Cytoplasmic-facing; that stretch reads RLCRRSRAAS…PKFRNSLVFS (85 aa).

The protein resides in the cell membrane. Potential calcium-dependent cell-adhesion protein. May be involved in the establishment and maintenance of specific neuronal connections in the brain. This chain is Protocadherin beta-4 (PCDHB4), found in Homo sapiens (Human).